Consider the following 78-residue polypeptide: CDC42 small effector protein 1 (78 aa).

S-palmitoyl cysteine attachment occurs at residues Cys-10 and Cys-11. Positions 30 to 43 (IGEPMNFVHLTHIG) constitute a CRIB domain.

The protein belongs to the CDC42SE/SPEC family.

The protein localises to the cytoplasm. The protein resides in the cytoskeleton. It localises to the cell membrane. In terms of biological role, probably involved in the organization of the actin cytoskeleton by acting downstream of CDC42, inducing actin filament assembly. The sequence is that of CDC42 small effector protein 1 (CDC42SE1) from Gallus gallus (Chicken).